The sequence spans 125 residues: Small ribosomal subunit protein uS12 (125 aa).

The tract at residues 9–31 is disordered; the sequence is RQGREVEKIKSKSPAMENSPQRR. Residue Asp89 is modified to 3-methylthioaspartic acid.

The protein belongs to the universal ribosomal protein uS12 family. As to quaternary structure, part of the 30S ribosomal subunit. Contacts proteins S8 and S17. May interact with IF1 in the 30S initiation complex.

Its function is as follows. With S4 and S5 plays an important role in translational accuracy. In terms of biological role, interacts with and stabilizes bases of the 16S rRNA that are involved in tRNA selection in the A site and with the mRNA backbone. Located at the interface of the 30S and 50S subunits, it traverses the body of the 30S subunit contacting proteins on the other side and probably holding the rRNA structure together. The combined cluster of proteins S8, S12 and S17 appears to hold together the shoulder and platform of the 30S subunit. The polypeptide is Small ribosomal subunit protein uS12 (Verminephrobacter eiseniae (strain EF01-2)).